Here is a 177-residue protein sequence, read N- to C-terminus: MSRVGKYPVSVPSGVTVQITGPEVTVKGKLGESKLTLRDNVEVTLDGNLIWVKPKNETKHARMMWGTTRAHLNNMVKGVSDGFTVNLEINGVGYRAAVEGKSLKLQLGYSHDIEYPIPDDVTMKCEKPTAISISGRDKRQVGQIAAEIRAFRGPEPYKGKGIKYETETILRKEGKKK.

It belongs to the universal ribosomal protein uL6 family. Part of the 50S ribosomal subunit.

Its function is as follows. This protein binds to the 23S rRNA, and is important in its secondary structure. It is located near the subunit interface in the base of the L7/L12 stalk, and near the tRNA binding site of the peptidyltransferase center. This Paramagnetospirillum magneticum (strain ATCC 700264 / AMB-1) (Magnetospirillum magneticum) protein is Large ribosomal subunit protein uL6.